The following is a 1154-amino-acid chain: Voltage-dependent calcium channel subunit alpha-2/delta-2 (1154 aa).

The first 18 residues, 1 to 18 (MAVPARTCGASWPGPVRT), serve as a signal peptide directing secretion. The tract at residues 1–37 (MAVPARTCGASWPGPVRTARPWPGRGPRPCPDPRGPA) is disordered. Over 19 to 1116 (ARPWPGRGPR…TEDTSDCGRG (1098 aa)) the chain is Extracellular. Residues 24–34 (GRGPRPCPDPR) are compositionally biased toward pro residues. N205 carries an N-linked (GlcNAc...) asparagine glycan. Residues 294–472 (DMVIIVDVSG…INTQEYLDVL (179 aa)) form the VWFA domain. A divalent metal cation is bound by residues D300, S302, and S304. Residues 300 to 304 (DVSGS) carry the MIDAS-like motif motif. N-linked (GlcNAc...) asparagine glycosylation is found at N389, N421, N510, N543, N627, and N864. C446 and C1101 are oxidised to a cystine. A Cache domain is found at 488 to 577 (WTNVYEDALG…KPQTTNFREP (90 aa)). Residues 1117–1137 (ASFPPSLGVLVSLQLLLLLGL) form a helical membrane-spanning segment. At 1138 to 1154 (PPRPQPQVHSFAASRHL) the chain is on the cytoplasmic side.

It belongs to the calcium channel subunit alpha-2/delta family. In terms of assembly, dimer formed of alpha-2-2 and delta-2 chains; disulfide-linked. Voltage-dependent calcium channels are multisubunit complexes, consisting of alpha-1 (CACNA1), alpha-2 (CACNA2D), beta (CACNB) and delta (CACNA2D) subunits in a 1:1:1:1 ratio. In terms of processing, N-glycosylated. Post-translationally, may be proteolytically processed into subunits alpha-2-2 and delta-2 that are disulfide-linked. It is however unclear whether such cleavage really takes place in vivo and has a functional role. According to PubMed:11306709, it is processed, at least in vitro, while according to PubMed:17052222, it is only poorly processed in vivo. Predominantly expressed in brain in a restricted pattern. Also expressed at lower level in kidney and testis Not expressed in lung at any moment of development. In brain, it localizes to sections of P21 brain. Expressed at high level in the cerebellum, with moderate levels in medulla, pons, and striatum. Also expressed in cortex, hippocampus, habenula and nucleus reticularis thalami (nRT). Strongly expressed in cerebellar Purkinje cells.

The protein localises to the membrane. Its function is as follows. The alpha-2/delta subunit of voltage-dependent calcium channels regulates calcium current density and activation/inactivation kinetics of the calcium channel. Acts as a regulatory subunit for P/Q-type calcium channel (CACNA1A), N-type (CACNA1B), L-type (CACNA1C OR CACNA1D) and possibly T-type (CACNA1G). The sequence is that of Voltage-dependent calcium channel subunit alpha-2/delta-2 (Cacna2d2) from Mus musculus (Mouse).